The primary structure comprises 208 residues: Outer-membrane lipoprotein carrier protein (208 aa).

The signal sequence occupies residues 1 to 22 (MKNLLCAVMLTSPLLYSTAVFA).

Belongs to the LolA family. As to quaternary structure, monomer.

It is found in the periplasm. Its function is as follows. Participates in the translocation of lipoproteins from the inner membrane to the outer membrane. Only forms a complex with a lipoprotein if the residue after the N-terminal Cys is not an aspartate (The Asp acts as a targeting signal to indicate that the lipoprotein should stay in the inner membrane). This Shewanella putrefaciens (strain CN-32 / ATCC BAA-453) protein is Outer-membrane lipoprotein carrier protein.